Here is a 234-residue protein sequence, read N- to C-terminus: UPF0104 membrane protein MJ1078 (234 aa).

Helical transmembrane passes span 32 to 52 (VGTV…LLFI), 70 to 90 (IKWG…FLIV), 123 to 143 (LITL…FIFL), 164 to 184 (LTAI…LIYI), and 198 to 218 (VLIL…AIMF).

The protein belongs to the UPF0104 family.

The protein resides in the cell membrane. This is UPF0104 membrane protein MJ1078 from Methanocaldococcus jannaschii (strain ATCC 43067 / DSM 2661 / JAL-1 / JCM 10045 / NBRC 100440) (Methanococcus jannaschii).